The chain runs to 254 residues: 4-hydroxy-tetrahydrodipicolinate reductase (254 aa).

NAD(+) is bound by residues 8–13, 87–89, and 111–114; these read GASGKM, GTT, and ATNM. His143 functions as the Proton donor/acceptor in the catalytic mechanism. His144 lines the (S)-2,3,4,5-tetrahydrodipicolinate pocket. Lys147 acts as the Proton donor in catalysis. Position 153–154 (153–154) interacts with (S)-2,3,4,5-tetrahydrodipicolinate; the sequence is GT.

This sequence belongs to the DapB family.

Its subcellular location is the cytoplasm. The enzyme catalyses (S)-2,3,4,5-tetrahydrodipicolinate + NAD(+) + H2O = (2S,4S)-4-hydroxy-2,3,4,5-tetrahydrodipicolinate + NADH + H(+). It catalyses the reaction (S)-2,3,4,5-tetrahydrodipicolinate + NADP(+) + H2O = (2S,4S)-4-hydroxy-2,3,4,5-tetrahydrodipicolinate + NADPH + H(+). It participates in amino-acid biosynthesis; L-lysine biosynthesis via DAP pathway; (S)-tetrahydrodipicolinate from L-aspartate: step 4/4. Catalyzes the conversion of 4-hydroxy-tetrahydrodipicolinate (HTPA) to tetrahydrodipicolinate. The polypeptide is 4-hydroxy-tetrahydrodipicolinate reductase (Campylobacter fetus subsp. fetus (strain 82-40)).